Here is a 597-residue protein sequence, read N- to C-terminus: Probable potassium transport system protein Kup 1 (597 aa).

Helical transmembrane passes span 23–43 (GAWL…DSVL), 72–92 (LTMM…SRGT), 98–118 (VFGS…VVAI), 143–163 (ATGL…EALY), 174–194 (IYFT…GQGA), 226–246 (AVVL…TGAF), 273–293 (LYIP…LLLF), 303–323 (YGLA…IYLW), 329–349 (FGAV…FAAS), and 353–373 (FLHG…IMYT).

This sequence belongs to the HAK/KUP transporter (TC 2.A.72) family.

It localises to the cell membrane. It carries out the reaction K(+)(in) + H(+)(in) = K(+)(out) + H(+)(out). In terms of biological role, transport of potassium into the cell. Likely operates as a K(+):H(+) symporter. The chain is Probable potassium transport system protein Kup 1 (kup1) from Bifidobacterium longum (strain NCC 2705).